The primary structure comprises 183 residues: ATP-dependent protease subunit HslV (183 aa).

Thr-13 is an active-site residue. The Na(+) site is built by Gly-168, Cys-171, and Thr-174.

The protein belongs to the peptidase T1B family. HslV subfamily. A double ring-shaped homohexamer of HslV is capped on each side by a ring-shaped HslU homohexamer. The assembly of the HslU/HslV complex is dependent on binding of ATP.

Its subcellular location is the cytoplasm. It carries out the reaction ATP-dependent cleavage of peptide bonds with broad specificity.. Allosterically activated by HslU binding. In terms of biological role, protease subunit of a proteasome-like degradation complex believed to be a general protein degrading machinery. This is ATP-dependent protease subunit HslV from Xylella fastidiosa (strain M23).